We begin with the raw amino-acid sequence, 42 residues long: Photosystem II reaction center protein J (42 aa).

Residues 10–30 (IPLWLVGTVVGTLALGLVALF) traverse the membrane as a helical segment.

The protein belongs to the PsbJ family. PSII is composed of 1 copy each of membrane proteins PsbA, PsbB, PsbC, PsbD, PsbE, PsbF, PsbH, PsbI, PsbJ, PsbK, PsbL, PsbM, PsbT, PsbX, PsbY, PsbZ, Psb30/Ycf12, at least 3 peripheral proteins of the oxygen-evolving complex and a large number of cofactors. It forms dimeric complexes.

The protein localises to the plastid. Its subcellular location is the chloroplast thylakoid membrane. In terms of biological role, one of the components of the core complex of photosystem II (PSII). PSII is a light-driven water:plastoquinone oxidoreductase that uses light energy to abstract electrons from H(2)O, generating O(2) and a proton gradient subsequently used for ATP formation. It consists of a core antenna complex that captures photons, and an electron transfer chain that converts photonic excitation into a charge separation. The chain is Photosystem II reaction center protein J from Oltmannsiellopsis viridis (Marine flagellate).